The primary structure comprises 305 residues: UDP-3-O-acyl-N-acetylglucosamine deacetylase (305 aa).

Zn(2+) contacts are provided by H79, H238, and D242. Residue H265 is the Proton donor of the active site.

The protein belongs to the LpxC family. Requires Zn(2+) as cofactor.

It catalyses the reaction a UDP-3-O-[(3R)-3-hydroxyacyl]-N-acetyl-alpha-D-glucosamine + H2O = a UDP-3-O-[(3R)-3-hydroxyacyl]-alpha-D-glucosamine + acetate. It participates in glycolipid biosynthesis; lipid IV(A) biosynthesis; lipid IV(A) from (3R)-3-hydroxytetradecanoyl-[acyl-carrier-protein] and UDP-N-acetyl-alpha-D-glucosamine: step 2/6. Its function is as follows. Catalyzes the hydrolysis of UDP-3-O-myristoyl-N-acetylglucosamine to form UDP-3-O-myristoylglucosamine and acetate, the committed step in lipid A biosynthesis. This Shewanella woodyi (strain ATCC 51908 / MS32) protein is UDP-3-O-acyl-N-acetylglucosamine deacetylase.